The following is a 329-amino-acid chain: Glycerol-3-phosphate dehydrogenase [NAD(P)+] (329 aa).

NADPH-binding residues include W11, R31, and K105. Positions 105, 135, and 137 each coordinate sn-glycerol 3-phosphate. A139 is an NADPH binding site. Sn-glycerol 3-phosphate contacts are provided by K190, D243, S253, R254, and N255. The Proton acceptor role is filled by K190. R254 lines the NADPH pocket. Positions 277 and 279 each coordinate NADPH.

It belongs to the NAD-dependent glycerol-3-phosphate dehydrogenase family.

The protein localises to the cytoplasm. The enzyme catalyses sn-glycerol 3-phosphate + NAD(+) = dihydroxyacetone phosphate + NADH + H(+). It carries out the reaction sn-glycerol 3-phosphate + NADP(+) = dihydroxyacetone phosphate + NADPH + H(+). Its pathway is membrane lipid metabolism; glycerophospholipid metabolism. Its function is as follows. Catalyzes the reduction of the glycolytic intermediate dihydroxyacetone phosphate (DHAP) to sn-glycerol 3-phosphate (G3P), the key precursor for phospholipid synthesis. This is Glycerol-3-phosphate dehydrogenase [NAD(P)+] from Maridesulfovibrio salexigens (strain ATCC 14822 / DSM 2638 / NCIMB 8403 / VKM B-1763) (Desulfovibrio salexigens).